Consider the following 282-residue polypeptide: MAAKIISGTELSKQIKANLADKITHYIEQGKRAPGLAVILVGADPASQIYVGNKRKSCEEVGILSKSYDLPETTTQNELLAIIDQLNADKNIDGILVQLPLPKQINAEAIIERIDPKKDVDGFHPYNVGRLCQRIPTLRACTPYGVMKLLETTGIDLHGKHAVIVGASNIVGRPMSLELLLAGATVTVTHRFTKNLENHVRQADILVVAVGKPNLISGDWIKESAVVIDVGINRVDGKLVGDVEFDKAAEKAAYITPVPGGVGPMTVAMLMSNTLYAYEHNK.

NADP(+) contacts are provided by residues 166–168 (GAS) and isoleucine 232.

This sequence belongs to the tetrahydrofolate dehydrogenase/cyclohydrolase family. Homodimer.

It catalyses the reaction (6R)-5,10-methylene-5,6,7,8-tetrahydrofolate + NADP(+) = (6R)-5,10-methenyltetrahydrofolate + NADPH. The catalysed reaction is (6R)-5,10-methenyltetrahydrofolate + H2O = (6R)-10-formyltetrahydrofolate + H(+). The protein operates within one-carbon metabolism; tetrahydrofolate interconversion. In terms of biological role, catalyzes the oxidation of 5,10-methylenetetrahydrofolate to 5,10-methenyltetrahydrofolate and then the hydrolysis of 5,10-methenyltetrahydrofolate to 10-formyltetrahydrofolate. The chain is Bifunctional protein FolD from Haemophilus influenzae (strain PittEE).